Reading from the N-terminus, the 489-residue chain is Protein translocase subunit SecY (489 aa).

The Cytoplasmic segment spans residues 1–20; sequence MGWKDAAEPVLSRMPAVARP. Residues 21–47 traverse the membrane as a helical segment; that stretch reads EGHVPFRRKLGWTGGILVLYFFLTNVT. Over 48–59 the chain is Extracellular; the sequence is LFGLDAATANDL. Positions 60-67 form an intramembrane region, helical; that stretch reads FGQFRSIL. Residues 60-88 traverse the membrane as a discontinuously helical segment; the sequence is FGQFRSILAGQQGSVLQLGIGPIVTASIV. Residues 68–79 lie within the membrane without spanning it; it reads AGQQGSVLQLGI. The helical intramembrane region spans 80 to 88; the sequence is GPIVTASIV. Residues 89-110 are Cytoplasmic-facing; it reads LQLLGGADLLGLDTDNNPRDQV. Residues 111–135 traverse the membrane as a helical segment; that stretch reads LYQGLQKLLVGVMICLTGLPMVFAG. Over 136-153 the chain is Extracellular; that stretch reads NFLPADQAVATSLGIGTV. The chain crosses the membrane as a helical span at residues 154–178; sequence GVKGLIFAQIAVGGVLILFMDEIVS. At 179 to 184 the chain is on the cytoplasmic side; sequence KWGVGS. A helical transmembrane segment spans residues 185 to 203; it reads GVGLFIIAGVSQQLVGGLF. The Extracellular segment spans residues 204–244; it reads SWQGLGGTSGFFATWIGIITGAIELPASPTDLLSTVFLGQG. A helical transmembrane segment spans residues 245-266; sequence QLLALITTLLIFGIVVYAESVR. Residues 267–291 lie on the Cytoplasmic side of the membrane; that stretch reads VEIPLSHARVKGARGRFPVKLIYAS. The chain crosses the membrane as a helical span at residues 292-313; it reads VLPMILVRALQANIQFLGRFLN. The Extracellular portion of the chain corresponds to 314–364; that stretch reads SSWVGMPAWLGQYTSGQVTGGLLYYLAPIQSRSDWMWFLGLTSADPLDIAI. Residues 365–384 form a helical membrane-spanning segment; the sequence is RVLIDLIFMIVGGAVFAIFW. Residues 385–427 are Cytoplasmic-facing; sequence VETTGMGPKSTAQQIQNSGMQIPGFRRNPQVIERVMERYIPQV. Residues 428–446 form a helical membrane-spanning segment; the sequence is TVIGGALVGLLAVMANMLG. The Extracellular segment spans residues 447–450; that stretch reads TIGA. A helical membrane pass occupies residues 451–465; the sequence is VSGTGLLLTVSITYK. The Cytoplasmic portion of the chain corresponds to 466–488; it reads LYEEIAEEQLMEMHPMMRNMFGS.

It belongs to the SecY/SEC61-alpha family. In terms of assembly, component of the Sec protein translocase complex. Heterotrimer consisting of alpha (SecY), beta (SecG) and gamma (SecE) subunits. The heterotrimers can form oligomers, although 1 heterotrimer is thought to be able to translocate proteins. Interacts with the ribosome. May interact with SecDF, and other proteins may be involved.

Its subcellular location is the cell membrane. The central subunit of the protein translocation channel SecYEG. Consists of two halves formed by TMs 1-5 and 6-10. These two domains form a lateral gate at the front which open onto the bilayer between TMs 2 and 7, and are clamped together by SecE at the back. The channel is closed by both a pore ring composed of hydrophobic SecY resides and a short helix (helix 2A) on the extracellular side of the membrane which forms a plug. The plug probably moves laterally to allow the channel to open. The ring and the pore may move independently. The sequence is that of Protein translocase subunit SecY from Haloferax volcanii (strain ATCC 29605 / DSM 3757 / JCM 8879 / NBRC 14742 / NCIMB 2012 / VKM B-1768 / DS2) (Halobacterium volcanii).